The following is a 363-amino-acid chain: NAD(P)H-quinone oxidoreductase subunit 1, chloroplastic (363 aa).

Transmembrane regions (helical) follow at residues 30 to 50 (LVPI…IVWL), 98 to 118 (FSIG…IIPF), 129 to 149 (IGVF…LMSG), 248 to 268 (YSGI…LVSS), 300 to 320 (VFGT…FLFI), and 336 to 356 (LLNL…LLTT).

It belongs to the complex I subunit 1 family. As to quaternary structure, NDH is composed of at least 16 different subunits, 5 of which are encoded in the nucleus.

It is found in the plastid. The protein localises to the chloroplast thylakoid membrane. The enzyme catalyses a plastoquinone + NADH + (n+1) H(+)(in) = a plastoquinol + NAD(+) + n H(+)(out). It catalyses the reaction a plastoquinone + NADPH + (n+1) H(+)(in) = a plastoquinol + NADP(+) + n H(+)(out). Functionally, NDH shuttles electrons from NAD(P)H:plastoquinone, via FMN and iron-sulfur (Fe-S) centers, to quinones in the photosynthetic chain and possibly in a chloroplast respiratory chain. The immediate electron acceptor for the enzyme in this species is believed to be plastoquinone. Couples the redox reaction to proton translocation, and thus conserves the redox energy in a proton gradient. This chain is NAD(P)H-quinone oxidoreductase subunit 1, chloroplastic, found in Vitis vinifera (Grape).